We begin with the raw amino-acid sequence, 98 residues long: C-X-C motif chemokine 10 (98 aa).

Positions 1–21 (MNQSAVLIFCLIFLTLNGTQG) are cleaved as a signal peptide. Citrulline is present on arginine 26. Intrachain disulfides connect cysteine 30–cysteine 57 and cysteine 32–cysteine 74.

This sequence belongs to the intercrine alpha (chemokine CxC) family. In terms of assembly, monomer, dimer, and tetramer. Interacts with CXCR3 (via N-terminus).

The protein localises to the secreted. Functionally, pro-inflammatory cytokine that is involved in a wide variety of processes such as chemotaxis, differentiation, and activation of peripheral immune cells, regulation of cell growth, apoptosis and modulation of angiostatic effects. Plays thereby an important role during viral infections by stimulating the activation and migration of immune cells to the infected sites. Mechanistically, binding of CXCL10 to the CXCR3 receptor activates G protein-mediated signaling and results in downstream activation of phospholipase C-dependent pathway, an increase in intracellular calcium production and actin reorganization. In turn, recruitment of activated Th1 lymphocytes occurs at sites of inflammation. Activation of the CXCL10/CXCR3 axis also plays an important role in neurons in response to brain injury for activating microglia, the resident macrophage population of the central nervous system, and directing them to the lesion site. This recruitment is an essential element for neuronal reorganization. This is C-X-C motif chemokine 10 (CXCL10) from Canis lupus familiaris (Dog).